We begin with the raw amino-acid sequence, 883 residues long: MNEQYSALRSNVSMLGKVLGETIKDALGEHILDRVETIRKLSKSSRAGNEANRQELLTTLQNLSNDELLPVARAFSQFLNLANTAEQYHSISPKGEAASNPEVIAHTLRKLKNQPDLNDATIKKAVESLSLELVLTAHPTEITRRTLIHKMGEINNCLKQLDNTDIADYERHQVMRRLRQLIAQSWHTDEIRKQRPSPVDEAKWGFAVVENSLWQGVPNYLRELNEQLEENLGYKLPVDFVPVRFTSWMGGDRDGNPNVTAEITRHVLLLSRWKATDLFLKDIHVLVSELSMVDATPELLALVGEEGASEPYRYLMKKLRARLMATQSWLEARLKGEKLPKPAGLLTQNEQLWEPLYACYQSLQACGMGIIANGELLDTLRRVKCFGVPLVRIDIRQESTRHTEALGEITRYLGIGDYESWSEADKQAFLIRELNSKRPLLPRNWEPSNDTREVLETCKVIAEAPKGSIAAYVISMAKTPSDVLAVHLLLKEAGIGFAMPVAPLFETLDDLNNADDVMTQLLNIDWYRGLIQGKQMVMIGYSDSAKDAGVMAASWAQYQAQDALIKTCEKAGIELTLFHGRGGSIGRGGAPAHAALLSQPPGSLKGGLRVTEQGEMIRFKYGLPEVTVSSLSLYTSAILEANLLPPPEPKDSWRHIMDELSVISCETYRGYVRENKDFVPYFRSATPEQELGKLPLGSRPAKRRPTGGVESLRAIPWIFAWTQNRLMLPAWLGAGTALQKVVEDGKQSELEAMCRDWPFFSTRLGMLEMVFSKADLWLADYYDQRLVAKTLWPLGKELRDLLEEDIKVVLAIANDSHLMADLPWIAESIQLRNVYTDPLNVLQAELLYRSRLTEEQGKSPDPRVEQALMVTIAGVAAGMRNTG.

Residues His138 and Lys546 contribute to the active site.

The protein belongs to the PEPCase type 1 family. In terms of assembly, homotetramer. The cofactor is Mg(2+).

It carries out the reaction oxaloacetate + phosphate = phosphoenolpyruvate + hydrogencarbonate. With respect to regulation, the enzyme has distinct binding sites for each of the allosteric effectors such as acetyl-CoA, fructose 1,6-bisphosphate, guanosine 3'-diphosphate 5'-diphosphate, long chain fatty acids, and L-aspartate. Its function is as follows. Forms oxaloacetate, a four-carbon dicarboxylic acid source for the tricarboxylic acid cycle. This chain is Phosphoenolpyruvate carboxylase (ppc), found in Salmonella typhi.